The primary structure comprises 862 residues: Leucine--tRNA ligase (862 aa).

Positions 51–61 (PYPSGSLHMGH) match the 'HIGH' region motif. The short motif at 624-628 (KMSKS) is the 'KMSKS' region element. Lys-627 is an ATP binding site.

This sequence belongs to the class-I aminoacyl-tRNA synthetase family.

The protein localises to the cytoplasm. The enzyme catalyses tRNA(Leu) + L-leucine + ATP = L-leucyl-tRNA(Leu) + AMP + diphosphate. The chain is Leucine--tRNA ligase from Prochlorococcus marinus (strain NATL1A).